We begin with the raw amino-acid sequence, 372 residues long: tRNA-specific 2-thiouridylase MnmA (372 aa).

Residues 16–23 (GMSGGVDS) and Met42 contribute to the ATP site. Residues 102–104 (NPD) form an interaction with target base in tRNA region. The active-site Nucleophile is the Cys107. A disulfide bond links Cys107 and Cys205. Gly132 contributes to the ATP binding site. Residues 155 to 157 (KDQ) are interaction with tRNA. Cys205 (cysteine persulfide intermediate) is an active-site residue. An interaction with tRNA region spans residues 317 to 318 (RY).

This sequence belongs to the MnmA/TRMU family.

The protein localises to the cytoplasm. It carries out the reaction S-sulfanyl-L-cysteinyl-[protein] + uridine(34) in tRNA + AH2 + ATP = 2-thiouridine(34) in tRNA + L-cysteinyl-[protein] + A + AMP + diphosphate + H(+). Its function is as follows. Catalyzes the 2-thiolation of uridine at the wobble position (U34) of tRNA, leading to the formation of s(2)U34. The chain is tRNA-specific 2-thiouridylase MnmA from Shewanella sp. (strain MR-7).